Here is a 234-residue protein sequence, read N- to C-terminus: Leucyl/phenylalanyl-tRNA--protein transferase (234 aa).

It belongs to the L/F-transferase family.

The protein resides in the cytoplasm. The enzyme catalyses N-terminal L-lysyl-[protein] + L-leucyl-tRNA(Leu) = N-terminal L-leucyl-L-lysyl-[protein] + tRNA(Leu) + H(+). It carries out the reaction N-terminal L-arginyl-[protein] + L-leucyl-tRNA(Leu) = N-terminal L-leucyl-L-arginyl-[protein] + tRNA(Leu) + H(+). The catalysed reaction is L-phenylalanyl-tRNA(Phe) + an N-terminal L-alpha-aminoacyl-[protein] = an N-terminal L-phenylalanyl-L-alpha-aminoacyl-[protein] + tRNA(Phe). Its function is as follows. Functions in the N-end rule pathway of protein degradation where it conjugates Leu, Phe and, less efficiently, Met from aminoacyl-tRNAs to the N-termini of proteins containing an N-terminal arginine or lysine. In Myxococcus xanthus (strain DK1622), this protein is Leucyl/phenylalanyl-tRNA--protein transferase.